Reading from the N-terminus, the 147-residue chain is ATP synthase subunit 9, mitochondrial (147 aa).

A mitochondrion-targeting transit peptide spans 1-66; it reads MASTRVLASR…TTRQAFQKRA (66 aa). Transmembrane regions (helical) follow at residues 86–106 and 123–143; these read SAAI…AALL and AILG…VALM.

Belongs to the ATPase C chain family. As to quaternary structure, F-type ATPases have 2 components, CF(1) - the catalytic core - and CF(0) - the membrane proton channel. CF(1) has five subunits: alpha(3), beta(3), gamma(1), delta(1), epsilon(1). CF(0) has three main subunits: a, b and c.

It is found in the mitochondrion membrane. In terms of biological role, mitochondrial membrane ATP synthase (F(1)F(0) ATP synthase or Complex V) produces ATP from ADP in the presence of a proton gradient across the membrane which is generated by electron transport complexes of the respiratory chain. F-type ATPases consist of two structural domains, F(1) - containing the extramembraneous catalytic core and F(0) - containing the membrane proton channel, linked together by a central stalk and a peripheral stalk. During catalysis, ATP synthesis in the catalytic domain of F(1) is coupled via a rotary mechanism of the central stalk subunits to proton translocation. Part of the complex F(0) domain. A homomeric c-ring of probably 10 subunits is part of the complex rotary element. The sequence is that of ATP synthase subunit 9, mitochondrial (oli) from Neurospora crassa (strain ATCC 24698 / 74-OR23-1A / CBS 708.71 / DSM 1257 / FGSC 987).